The chain runs to 104 residues: Cytochrome c6 (104 aa).

The signal sequence occupies residues 1 to 20; it reads MKSLLTFILTTIFCIQQVWA. Cys-34, Cys-37, His-38, and Met-78 together coordinate heme c.

It belongs to the cytochrome c family. PetJ subfamily. As to quaternary structure, monomer. Binds 1 heme c group covalently per subunit.

The protein localises to the plastid. The protein resides in the chloroplast thylakoid lumen. Functionally, functions as an electron carrier between membrane-bound cytochrome b6-f and photosystem I in oxygenic photosynthesis. The protein is Cytochrome c6 of Cyanidioschyzon merolae (strain NIES-3377 / 10D) (Unicellular red alga).